Consider the following 2185-residue polypeptide: MSAFKGSTTAKFVGRGNEYPTQANSFAQVAQQLLNSKKVDEIDEMMGFPRFIPSPALSDSKVGWLSNMHPTIISQEMLEEEGNLHSATVSGISGVDFYFIDEEGGSFKTTVTYDPYFFVSCTDETRIHDIEEYLKKTLEQCIKKVELVLKDDLAMNNHLVGLKKHLIKLSFSNSNQLFEARRILRPILKINEDENGKKDIYNTGSDYSTRDVKTLIEDIREYDVPYHVRVSIDKNIRVGKWYAVSAQGLVELEEKVTFADPVVLAFDIETTKAPLKFPDSAIDQIMMISYMIDGEGFLITNREIISEDIEDFEYTPKDEYKGQFAIFNEPDEMALLQRFFEHIRDVRPTVISTFNGDFFDWPFVENRAKFHGLNMFDEIGFAPDSEGEYKSSYCTHMDCFRWVKRDSYLPQGSQGLKAVTQAKLGYNPLELDPELMTPYAYEKPQILSEYSVSDAVATYYLYMKYVHPFIFSLCTIIPLNPDEVLRKGTGTLCEMLLMVQAYQNSVLLPNKHTDPIERFYDGHLLESETYVGGHVESLEAGVFRSDLKNDFKIDPTVIDILLEDLPYALKFCIEVENNGNMEDVTNFEEIKQQITAQLTDLKINNKRNELPLIYHVDVASMYPNIMTTNRLQPDSMKDEKDCASCDFNRPGKSCDRRLKWAWRGEFFPAKMDEYGMVKRALQNELFPNKNPKSKKQFLTFEELSYSDQVSHIKKRLTDYSRKVYHRVKVTETVEREAIVCQRENPFYVNTVRSFRDRRYEFKGLAKLWKGKLSKIKPDDVHSKDEAKKMIVLYDSLQLAHKVILNSFYGYVMRKGSRWYSMEMAGITCLTGANIIQMARSVVERIGRPLELDTDGIWCILPKSFPENFEIKLRNGKKLFLSYPCSMLNYKVHQKYTNHQYQDLVDPMKFKYQTKSDNSIFFEVDGPYKAMILPTSKEEGKGIKKRYAVFNEDGSLAELKGFELKRRGELQLIKNFQSDIFKLFLEGTTLESCYAAVATVANRWLDVLDSKGAMLETEDLIELICENKSMSKTLKEYQGQKSTSITTARRLGEFLGEAMVKDAGLQCKFIISSKPHNAPVTERAIPVAIFSSDLHVKRTFLRRWLLDSSLNDFDPRAIIDWDYYRERLASVVQKIITIPAALQNIKNPVPRVEHPDWLRKKIAVSEDKFKQTSLNRFFKSTKAPPEVKDIEDSFDEHSANKSRIAKVTYKRKSKRRNGDTALEEESLLLPSEMPPMLDDYVGWLQYQKTKWKIQHIDRKKREKLFGKTSRASDRSALGNLIRKHVESYADKSWEILQCKPSIDLGVVEIYALIDRKIQLLKVNIPKTVLMNFKTENFPSGGIENCIVEKSNAELPNVKGINNESSSQLFKLTMSEDTYFNEVNKASSVLNNENVLGIYESSISSNERVIMRLGTCIQFSSEKMGALGKGLQNGFHMKNLHPVEADRYLQRFDLDIAYLLHFVTDIGYEFYFLYKAWEDVVEIFVLKPSTHAQEVSNKAIESLYNEIYEKKFEKLDKYYDLIKINKNVSFNVNDYTELKRLLKDLSKMLQNIKEEKGSHTMVILQSPYTHRVAKLLQPLNAFPVVEIATAETHLPALNWQGQLMRKAVNHILSLGSWISNLITLSKYSNIPICNLKVDNLGYIIDLMYARQLKKNNIVLWWNDKSPLPDHGGVERDFDPRKAELMTDLVFPIMNNPDIYDDVIFEISVYNSVVNTVLSSTMLNEAEGTDLAQNSTSKEESFGFVEDSFSSSALSVLRALLKELWDDALGDNITADSLVHAFIGWVYNPDAKLFDYALRYHIHTLTQKAVLQLINEFKLAGSSLIFADRNKLLIKTQKRSVENSYAYGQYLMKAIRSKPMFAYLDLKIDRYWDVLIWMDKYNYGGRACLQIEDKEVQSFQAYSHWHIKDFLPAIYQQEFDDWLVVILDSMVKTKEAYHERNASTQRLTQLPKNTLADSDVDSQTDSLGGFTHNFSKALIKRAEKLYKNQQEYILDPNFGKDYLSPTIPGSHLVVKNPLLELVKYLSHILSLSSNHLLEGRALRKELLKTFEIREFDRLAEFKDPSTSFVIPSFICEHCSYISDIDICRESMERVFICQSCNRSLNKNLIEEHVIERLQAQVASFITQDVKCNKCHKIKEDAMSPYCPCSGKWELAVSKESFMAQLQIFKNLAESFDFRTLKETLNDFL.

The Zn(2+) site is built by cysteine 2072, cysteine 2075, cysteine 2094, and cysteine 2097. The CysA-type zinc finger occupies 2072–2097 (CEHCSYISDIDICRESMERVFICQSC). [4Fe-4S] cluster is bound by residues cysteine 2128, cysteine 2131, cysteine 2143, and cysteine 2145. The CysB motif signature appears at 2128 to 2145 (CNKCHKIKEDAMSPYCPC).

It belongs to the DNA polymerase type-B family. In terms of assembly, heterotetramer. Consists of 4 subunits: POL2, DPB2, DPB3 and DPB4. Requires [4Fe-4S] cluster as cofactor.

It is found in the nucleus. The enzyme catalyses DNA(n) + a 2'-deoxyribonucleoside 5'-triphosphate = DNA(n+1) + diphosphate. DNA polymerase II participates in chromosomal DNA replication. In Kluyveromyces lactis (strain ATCC 8585 / CBS 2359 / DSM 70799 / NBRC 1267 / NRRL Y-1140 / WM37) (Yeast), this protein is DNA polymerase epsilon catalytic subunit A (POL2).